The primary structure comprises 130 residues: Small ribosomal subunit protein uS9 (130 aa).

Residues 98–130 (LKRAGLLTRDPRMKERKKPGLKKARRSPQFSKR) form a disordered region. Residues 111 to 130 (KERKKPGLKKARRSPQFSKR) show a composition bias toward basic residues.

It belongs to the universal ribosomal protein uS9 family.

This Staphylococcus haemolyticus (strain JCSC1435) protein is Small ribosomal subunit protein uS9.